A 340-amino-acid chain; its full sequence is Erlin-2 (340 aa).

Over 1 to 3 (MAQ) the chain is Cytoplasmic. A helical membrane pass occupies residues 4–24 (LGAVVAVASSFFCASLFSAVH). The Lumenal segment spans residues 25-340 (KIEEGHIGVY…EPLEAPTKEN (316 aa)). N-linked (GlcNAc...) asparagine glycosylation occurs at asparagine 106. The interaction with ERLIN1 stretch occupies residues 177 to 309 (EAIRRNYELM…DIPNMFMDSA (133 aa)). Position 267 is an N6-acetyllysine (lysine 267).

Belongs to the band 7/mec-2 family. In terms of assembly, forms a heteromeric complex with ERLIN1. In complex with ERLIN1, interacts with RNF170. Interacts with activated ITPR1, independently of the degree of ITPR1 polyubiquitination. Interacts with SCAP, INSIG1, SREBF1 and SREBF2 under cholesterol sufficiency conditions; indicative for an association with the SCAP-SREBP-INSIG complex. Probably part of an AMFR/gp78 and INSIG1-containing ubiquitin ligase complex involved in ERAD of HMGCR. Interacts with TMUB1; TMUB1 bridges the association with AMFR. Interacts with SYVN1 and RNF139. Interacts with TMEM259. Interacts with TMEM41B. Deubiquitinated by USP25; leading to stabilization.

Its subcellular location is the endoplasmic reticulum membrane. In terms of biological role, component of the ERLIN1/ERLIN2 complex which mediates the endoplasmic reticulum-associated degradation (ERAD) of inositol 1,4,5-trisphosphate receptors (IP3Rs) such as ITPR1. Promotes sterol-accelerated ERAD of HMGCR probably implicating an AMFR/gp78-containing ubiquitin ligase complex. Involved in regulation of cellular cholesterol homeostasis by regulation the SREBP signaling pathway. May promote ER retention of the SCAP-SREBF complex. The protein is Erlin-2 (Erlin2) of Mus musculus (Mouse).